The following is a 232-amino-acid chain: Thiamine import ATP-binding protein ThiQ (232 aa).

The ABC transporter domain occupies 2 to 230 (LKLTDITWLY…KASASALLGI (229 aa)). 32–39 (GPSGAGKS) provides a ligand contact to ATP.

Belongs to the ABC transporter superfamily. Thiamine importer (TC 3.A.1.19.1) family. The complex is composed of two ATP-binding proteins (ThiQ), two transmembrane proteins (ThiP) and a solute-binding protein (ThiB).

It is found in the cell inner membrane. The enzyme catalyses thiamine(out) + ATP + H2O = thiamine(in) + ADP + phosphate + H(+). In terms of biological role, part of the ABC transporter complex ThiBPQ involved in thiamine import. Responsible for energy coupling to the transport system. This is Thiamine import ATP-binding protein ThiQ from Escherichia coli (strain UTI89 / UPEC).